Here is a 258-residue protein sequence, read N- to C-terminus: Imidazole glycerol phosphate synthase subunit HisF (258 aa).

Residues Asp-11 and Asp-130 contribute to the active site.

Belongs to the HisA/HisF family. In terms of assembly, heterodimer of HisH and HisF.

It is found in the cytoplasm. The enzyme catalyses 5-[(5-phospho-1-deoxy-D-ribulos-1-ylimino)methylamino]-1-(5-phospho-beta-D-ribosyl)imidazole-4-carboxamide + L-glutamine = D-erythro-1-(imidazol-4-yl)glycerol 3-phosphate + 5-amino-1-(5-phospho-beta-D-ribosyl)imidazole-4-carboxamide + L-glutamate + H(+). It functions in the pathway amino-acid biosynthesis; L-histidine biosynthesis; L-histidine from 5-phospho-alpha-D-ribose 1-diphosphate: step 5/9. Functionally, IGPS catalyzes the conversion of PRFAR and glutamine to IGP, AICAR and glutamate. The HisF subunit catalyzes the cyclization activity that produces IGP and AICAR from PRFAR using the ammonia provided by the HisH subunit. This Shigella sonnei (strain Ss046) protein is Imidazole glycerol phosphate synthase subunit HisF.